A 334-amino-acid chain; its full sequence is MAFNLRNRNFLKLLDFSTKEIQFLIDLSADLKKAKYAGTEQKKLLGKNIALIFEKASTRTRCAFEVAAFDQGAQVTYIGPSGSQIGDKESMKDTARVLGRMYDGIQYRGFGQAIVEELGAFAGVPVWNGLTDEFHPTQILADFLTMLEHSQGKALADIQFAYLGDARNNVGNSLMVGAAKMGMDIRLVGPQAYWPDEELVAACQAIAKQTGGKITLTENVAEGVQGCDFLYTDVWVSMGESPEAWDERVALMKPYQVNMNVLKQTGNPNVKFMHCLPAFHNDETTIGKQVADKFGMKGLEVTEEVFESEHSIVFDEAENRMHTIKAVMVATLGS.

Carbamoyl phosphate contacts are provided by residues 57-60, Q84, R108, and 135-138; these read STRT and HPTQ. L-ornithine is bound by residues N169, D233, and 237–238; that span reads SM. Carbamoyl phosphate-binding positions include 275 to 276 and R320; that span reads CL.

It belongs to the aspartate/ornithine carbamoyltransferase superfamily. OTCase family. In terms of assembly, homotrimer.

The protein localises to the cytoplasm. The catalysed reaction is carbamoyl phosphate + L-ornithine = L-citrulline + phosphate + H(+). It participates in amino-acid biosynthesis; L-arginine biosynthesis; L-arginine from L-ornithine and carbamoyl phosphate: step 1/3. Reversibly catalyzes the transfer of the carbamoyl group from carbamoyl phosphate (CP) to the N(epsilon) atom of ornithine (ORN) to produce L-citrulline. This is Ornithine carbamoyltransferase from Vibrio vulnificus (strain CMCP6).